Here is a 362-residue protein sequence, read N- to C-terminus: Protein RecA (362 aa).

Position 77-84 (77-84 (GPESSGKT)) interacts with ATP.

It belongs to the RecA family.

It localises to the cytoplasm. Its function is as follows. Can catalyze the hydrolysis of ATP in the presence of single-stranded DNA, the ATP-dependent uptake of single-stranded DNA by duplex DNA, and the ATP-dependent hybridization of homologous single-stranded DNAs. It interacts with LexA causing its activation and leading to its autocatalytic cleavage. This is Protein RecA from Rhizobium leguminosarum bv. trifolii (strain WSM2304).